The chain runs to 486 residues: E3 ubiquitin-protein ligase RNF8 (486 aa).

Positions 38–92 (VTVGRGFGVTYQLVSKICPLMISRNHCVLKQNPEGQWTIMDNKSLNGVWLNRARL) constitute an FHA domain. The required for interaction with PIWIL1 stretch occupies residues 68–72 (QNPEG). Position 157 is a phosphoserine (S157). Positions 180 to 201 (SCESGQSVKSQGKGEVSSTPSE) are enriched in polar residues. Residues 180 to 207 (SCESGQSVKSQGKGEVSSTPSENLDPKL) are disordered. Residues 404 to 442 (CIICSEYFIEAVTLNCAHSFCSYCINEWMKRKIECPICR) form an RING-type zinc finger.

This sequence belongs to the RNF8 family. As to quaternary structure, homodimer. Forms a E2-E3 ubiquitin ligase complex composed of the RNF8 homodimer and a E2 heterodimer of UBE2N and UBE2V2. Interacts with class III E2s, including UBE2E1, UBE2E2, and UBE2E3 and with UBE2N. Interacts with RXRA. Interacts (via FHA domain) with phosphorylated HERC2 (via C-terminus). Interacts with PIWIL1; leading to sequester RNF8 in the cytoplasm. Interacts with WRAP53/TCAB1. Post-translationally, autoubiquitinated through 'Lys-48' and 'Lys-63' of ubiquitin. 'Lys-63' polyubiquitination is mediated by UBE2N. 'Lys-29'-type polyubiquitination is also observed, but it doesn't require its own functional RING-type zinc finger.

The protein resides in the nucleus. The protein localises to the cytoplasm. It localises to the midbody. It is found in the chromosome. Its subcellular location is the telomere. The enzyme catalyses S-ubiquitinyl-[E2 ubiquitin-conjugating enzyme]-L-cysteine + [acceptor protein]-L-lysine = [E2 ubiquitin-conjugating enzyme]-L-cysteine + N(6)-ubiquitinyl-[acceptor protein]-L-lysine.. It participates in protein modification; protein ubiquitination. Functionally, E3 ubiquitin-protein ligase that plays a key role in DNA damage signaling via 2 distinct roles: by mediating the 'Lys-63'-linked ubiquitination of histones H2A and H2AX and promoting the recruitment of DNA repair proteins at double-strand breaks (DSBs) sites, and by catalyzing 'Lys-48'-linked ubiquitination to remove target proteins from DNA damage sites. Following DNA DSBs, it is recruited to the sites of damage by ATM-phosphorylated MDC1 and catalyzes the 'Lys-63'-linked ubiquitination of histones H2A and H2AX, thereby promoting the formation of TP53BP1 and BRCA1 ionizing radiation-induced foci (IRIF). Also controls the recruitment of UIMC1-BRCC3 (RAP80-BRCC36) and PAXIP1/PTIP to DNA damage sites. Promotes the recruitment of NBN to DNA damage sites by catalyzing 'Lys-6'-linked ubiquitination of NBN. Also recruited at DNA interstrand cross-links (ICLs) sites and catalyzes 'Lys-63'-linked ubiquitination of histones H2A and H2AX, leading to recruitment of FAAP20 and Fanconi anemia (FA) complex, followed by interstrand cross-link repair. H2A ubiquitination also mediates the ATM-dependent transcriptional silencing at regions flanking DSBs in cis, a mechanism to avoid collision between transcription and repair intermediates. Promotes the formation of 'Lys-63'-linked polyubiquitin chains via interactions with the specific ubiquitin-conjugating UBE2N/UBC13 and ubiquitinates non-histone substrates such as PCNA. Substrates that are polyubiquitinated at 'Lys-63' are usually not targeted for degradation. Also catalyzes the formation of 'Lys-48'-linked polyubiquitin chains via interaction with the ubiquitin-conjugating UBE2L6/UBCH8, leading to degradation of substrate proteins such as CHEK2, JMJD2A/KDM4A and KU80/XRCC5: it is still unclear how the preference toward 'Lys-48'- versus 'Lys-63'-linked ubiquitination is regulated but it could be due to RNF8 ability to interact with specific E2 specific ligases. For instance, interaction with phosphorylated HERC2 promotes the association between RNF8 and UBE2N/UBC13 and favors the specific formation of 'Lys-63'-linked ubiquitin chains. Promotes non-homologous end joining (NHEJ) by promoting the 'Lys-48'-linked ubiquitination and degradation the of KU80/XRCC5. Following DNA damage, mediates the ubiquitination and degradation of JMJD2A/KDM4A in collaboration with RNF168, leading to unmask H4K20me2 mark and promote the recruitment of TP53BP1 at DNA damage sites. Following DNA damage, mediates the ubiquitination and degradation of POLD4/p12, a subunit of DNA polymerase delta. In the absence of POLD4, DNA polymerase delta complex exhibits higher proofreading activity. In addition to its function in damage signaling, also plays a role in higher-order chromatin structure by mediating extensive chromatin decondensation. Involved in the activation of ATM by promoting histone H2B ubiquitination, which indirectly triggers histone H4 'Lys-16' acetylation (H4K16ac), establishing a chromatin environment that promotes efficient activation of ATM kinase. Required in the testis, where it plays a role in the replacement of histones during spermatogenesis. At uncapped telomeres, promotes the joining of deprotected chromosome ends by inducing H2A ubiquitination and TP53BP1 recruitment, suggesting that it may enhance cancer development by aggravating telomere-induced genome instability in case of telomeric crisis. Promotes the assembly of RAD51 at DNA DSBs in the absence of BRCA1 and TP53BP1 Also involved in class switch recombination in immune system, via its role in regulation of DSBs repair. May be required for proper exit from mitosis after spindle checkpoint activation and may regulate cytokinesis. May play a role in the regulation of RXRA-mediated transcriptional activity. Not involved in RXRA ubiquitination by UBE2E2. The chain is E3 ubiquitin-protein ligase RNF8 from Pongo abelii (Sumatran orangutan).